We begin with the raw amino-acid sequence, 128 residues long: Ribonuclease P protein component (128 aa).

It belongs to the RnpA family. In terms of assembly, consists of a catalytic RNA component (M1 or rnpB) and a protein subunit.

The catalysed reaction is Endonucleolytic cleavage of RNA, removing 5'-extranucleotides from tRNA precursor.. Its function is as follows. RNaseP catalyzes the removal of the 5'-leader sequence from pre-tRNA to produce the mature 5'-terminus. It can also cleave other RNA substrates such as 4.5S RNA. The protein component plays an auxiliary but essential role in vivo by binding to the 5'-leader sequence and broadening the substrate specificity of the ribozyme. This Prochlorococcus marinus (strain MIT 9312) protein is Ribonuclease P protein component.